Consider the following 186-residue polypeptide: Ran guanine nucleotide release factor (186 aa).

Positions 27-70 are interaction with RAN; that stretch reads DLRPVPDHQEVFCHRVTDQSLIVELLELQAHVQGEEAARYHFED.

Belongs to the MOG1 family. As to quaternary structure, monomer. Interacts with RAN, both RAN-GTP and RAN-GDP. Competes with RCC1 for a common binding site on RAN and thereby inhibits RCC1-mediated nucleotide exchange. Forms a complex with RAN-GTP and RANBP1. Interacts with the cytoplasmic loop 2 of SCN5A.

Its subcellular location is the nucleus. It localises to the cytoplasm. The protein localises to the perinuclear region. It is found in the cell membrane. May regulate the intracellular trafficking of RAN. Promotes guanine nucleotide release from RAN and inhibits binding of new GTP by preventing the binding of the RAN guanine nucleotide exchange factor RCC1. Regulates the levels of GTP-bound RAN in the nucleus, and thereby plays a role in the regulation of RAN-dependent mitotic spindle dynamics. Enhances the expression of SCN5A at the cell membrane in cardiomyocytes. The protein is Ran guanine nucleotide release factor (RANGRF) of Bos taurus (Bovine).